Reading from the N-terminus, the 314-residue chain is Altered inheritance of mitochondria protein 6 homolog ARB_06966 (314 aa).

Residues 1-21 form the signal peptide; the sequence is MKSSILASAAILAASLEPVAA. 2 N-linked (GlcNAc...) asparagine glycosylation sites follow: asparagine 91 and asparagine 184.

Belongs to the AIM6 family.

The protein resides in the secreted. In Arthroderma benhamiae (strain ATCC MYA-4681 / CBS 112371) (Trichophyton mentagrophytes), this protein is Altered inheritance of mitochondria protein 6 homolog ARB_06966.